A 325-amino-acid chain; its full sequence is tRNA-dihydrouridine(16) synthase (325 aa).

FMN-binding positions include 12 to 14 (PMQ) and Gln73. Cys103 serves as the catalytic Proton donor. Residues Lys144, 205–207 (NGE), and 229–230 (GR) contribute to the FMN site.

Belongs to the Dus family. DusC subfamily. The cofactor is FMN.

It carries out the reaction 5,6-dihydrouridine(16) in tRNA + NADP(+) = uridine(16) in tRNA + NADPH + H(+). It catalyses the reaction 5,6-dihydrouridine(16) in tRNA + NAD(+) = uridine(16) in tRNA + NADH + H(+). In terms of biological role, catalyzes the synthesis of 5,6-dihydrouridine (D), a modified base found in the D-loop of most tRNAs, via the reduction of the C5-C6 double bond in target uridines. Specifically modifies U16 in tRNAs. This is tRNA-dihydrouridine(16) synthase from Haemophilus ducreyi (strain 35000HP / ATCC 700724).